A 615-amino-acid polypeptide reads, in one-letter code: NEDD8 ultimate buster 1 (615 aa).

Coiled-coil stretches lie at residues 36–70 and 152–203; these read LALKDLAKQYSDRLECCENEVEKVIEEIRCKAIER and KAMV…AAET. UBA domains are found at residues 374–413, 424–470, and 489–529; these read YIDPSKVDNLLQLGFTAQEARLGLRACDGNVDHAATHITN, EEKE…LLSN, and SPSQ…LAHN. A Nuclear localization signal motif is present at residues 414–431; it reads RREELAQIRKEEKEKKRR. The segment at 427-474 is NEDD8-binding 1; it reads EKKRRRLENIRFLKGMGYSTHAAQQVLHAASGNLDEALKILLSNPQMW. The interval 532 to 586 is disordered; the sequence is SLPPELPLSPEDSLSPPATSPSDSAGTSSASTDEDMETEAVNEILEDIPEHEEDY. The span at 539–562 shows a compositional bias: low complexity; the sequence is LSPEDSLSPPATSPSDSAGTSSAS. The interval 550 to 598 is NEDD8-binding 2; the sequence is TSPSDSAGTSSASTDEDMETEAVNEILEDIPEHEEDYLDSTLEDEEIII. Over residues 563–586 the composition is skewed to acidic residues; it reads TDEDMETEAVNEILEDIPEHEEDY.

Directly interacts with NEDD8 and PSMD4/S5a, a member of the regulatory subunit of the 26S proteasome. Isoform 1 binds to NEDD8 more efficiently than isoform 2. Interacts with AIPL1. The interaction with UBD via UBA domains facilitates the linking of UBD-conjugated target protein to the proteasome complex and accelerates UBD degradation and that of its conjugates. In terms of tissue distribution, widely expressed with lowest expression in the pancreas for isoform 1 and in leukocytes, liver, prostate and skeletal muscle for isoform 2.

The protein localises to the nucleus. In terms of biological role, specific down-regulator of the NEDD8 conjugation system. Recruits NEDD8, UBD, and their conjugates to the proteasome for degradation. Isoform 1 promotes the degradation of NEDD8 more efficiently than isoform 2. This chain is NEDD8 ultimate buster 1 (NUB1), found in Homo sapiens (Human).